Consider the following 723-residue polypeptide: Tripartite motif-containing protein 42 (723 aa).

The RING-type zinc-finger motif lies at 146 to 192 (CPMCNRLRLHSFMLPCNHSLCEKCLRQLQKHAEVTENFFILICPMCS). 2 consecutive B box-type zinc fingers follow at residues 235–280 (PILC…FVDT) and 285–326 (QDEK…TVSL). The Zn(2+) site is built by Cys290, His293, Cys313, and His318. The stretch at 382 to 412 (KLRAILQEKEKIIMEQIENLEVSRQKEIEKY) forms a coiled coil. Residues 434–492 (LKETGQVAFLQSAKILVDQIEEGIQNTFRPDPQLRLHSLHCIPLDFAELSNAIHELFPT) enclose the COS domain. The 99-residue stretch at 603 to 701 (TPGPIVIYQT…DICKVVTPDG (99 aa)) folds into the Fibronectin type-III domain.

The protein belongs to the TRIM/RBCC family.

The protein is Tripartite motif-containing protein 42 (Trim42) of Mus musculus (Mouse).